The chain runs to 479 residues: Ubiquinone biosynthesis monooxygenase COQ6, mitochondrial (479 aa).

Residues 1-17 (MFFSKVMLTRRILVRGL) constitute a mitochondrion transit peptide.

The protein belongs to the UbiH/COQ6 family. As to quaternary structure, component of a multi-subunit COQ enzyme complex, composed of at least COQ3, COQ4, COQ5, COQ6, COQ7 and COQ9. FAD serves as cofactor.

The protein resides in the mitochondrion inner membrane. The catalysed reaction is 4-hydroxy-3-(all-trans-hexaprenyl)benzoate + 2 reduced [2Fe-2S]-[ferredoxin] + O2 + 2 H(+) = 3,4-dihydroxy-5-(all-trans-hexaprenyl)benzoate + 2 oxidized [2Fe-2S]-[ferredoxin] + H2O. It carries out the reaction 2-methoxy-6-(all-trans-hexaprenyl)phenol + 2 reduced [2Fe-2S]-[ferredoxin] + O2 + 2 H(+) = 2-methoxy-6-(all-trans-hexaprenyl)benzene-1,4-diol + 2 oxidized [2Fe-2S]-[ferredoxin] + H2O. It catalyses the reaction 4-amino-3-(all-trans-hexaprenyl)benzoate + 2 reduced [2Fe-2S]-[ferredoxin] + O2 + 2 H(+) = 4-amino-5-hydroxy-3-(all-trans-hexaprenyl)benzoate + 2 oxidized [2Fe-2S]-[ferredoxin] + H2O. The enzyme catalyses 4-amino-5-hydroxy-3-(all-trans-hexaprenyl)benzoate + 4 reduced [2Fe-2S]-[ferredoxin] + O2 + 5 H(+) = 3,4-dihydroxy-5-(all-trans-hexaprenyl)benzoate + 4 oxidized [2Fe-2S]-[ferredoxin] + NH4(+) + H2O. It functions in the pathway cofactor biosynthesis; ubiquinone biosynthesis. Functionally, FAD-dependent monooxygenase required for two non-consecutive steps during ubiquinone biosynthesis. Required for the C5-ring hydroxylation during ubiquinone biosynthesis by catalyzing the hydroxylation of 4-hydroxy-3-(all-trans-hexaprenyl)benzoic acid to 3,4-dihydroxy-5-(all-trans-hexaprenyl)benzoic acid. Also acts downstream of COQ4, for the C1-hydroxylation during ubiquinone biosynthesis by catalyzing the hydroxylation of 2-methoxy-6-(all-trans-hexaprenyl)phenol to 2-methoxy-6-(all-trans-hexaprenyl)benzene-1,4-diol. The electrons required for the hydroxylation reaction are funneled indirectly from NADPH via ferredoxin (YAH1) and ferredoxin reductase (ARH1) to COQ6. Can also convert 3-hexaprenyl-4-aminobenzoic acid (HAB), a COQ2-prenylated pABA, to DHHB in a two step process. HAB is first hydroxylated at C5 to yield 3-hexaprenyl-4-amino-5-hydroxybenzoic acid (HHAB) which is further deaminated at C4 by COQ6 to produce DHHB. The polypeptide is Ubiquinone biosynthesis monooxygenase COQ6, mitochondrial (Saccharomyces cerevisiae (strain ATCC 204508 / S288c) (Baker's yeast)).